Here is a 420-residue protein sequence, read N- to C-terminus: Tryptophan synthase beta chain (420 aa).

At Lys112 the chain carries N6-(pyridoxal phosphate)lysine.

Belongs to the TrpB family. As to quaternary structure, tetramer of two alpha and two beta chains. Pyridoxal 5'-phosphate serves as cofactor.

The enzyme catalyses (1S,2R)-1-C-(indol-3-yl)glycerol 3-phosphate + L-serine = D-glyceraldehyde 3-phosphate + L-tryptophan + H2O. It participates in amino-acid biosynthesis; L-tryptophan biosynthesis; L-tryptophan from chorismate: step 5/5. The beta subunit is responsible for the synthesis of L-tryptophan from indole and L-serine. This Thermosipho africanus (strain TCF52B) protein is Tryptophan synthase beta chain.